We begin with the raw amino-acid sequence, 173 residues long: Alpha-crystallin A chain (173 aa).

Position 1 is an N-acetylmethionine (Met-1). Residues 1–63 (MDVTIQHPWF…RTVLDSGISE (63 aa)) form a required for complex formation with BFSP1 and BFSP2 region. Gln-6 carries the post-translational modification Deamidated glutamine; partial. Ser-45 bears the Phosphoserine mark. Gln-50 is modified (deamidated glutamine; partial). Positions 52–162 (LFRTVLDSGI…GHSERAIPVS (111 aa)) constitute a sHSP domain. Lys-70 bears the N6-acetyllysine mark. Gln-90 is subject to Deamidated glutamine; partial. Lys-99 carries the N6-acetyllysine modification. 3 residues coordinate Zn(2+): His-100, Glu-102, and His-107. The residue at position 122 (Ser-122) is a Phosphoserine. Asn-123 bears the Deamidated asparagine; partial mark. The disordered stretch occupies residues 145–173 (KVQSGLDAGHSERAIPVSREEKPSSAPSS). Deamidated glutamine; partial is present on Gln-147. Positions 153–167 (GHSERAIPVSREEKP) are enriched in basic and acidic residues. Zn(2+) is bound at residue His-154. The O-linked (GlcNAc) serine glycan is linked to Ser-162.

Belongs to the small heat shock protein (HSP20) family. Heteromer composed of three CRYAA and one CRYAB subunits. Inter-subunit bridging via zinc ions enhances stability, which is crucial as there is no protein turn over in the lens. Can also form homodimers and homotetramers (dimers of dimers) which serve as the building blocks of homooligomers. Within homooligomers, the zinc-binding motif is created from residues of 3 different molecules. His-100 and Glu-102 from one molecule are ligands of the zinc ion, and His-107 and His-154 residues from additional molecules complete the site with tetrahedral coordination geometry. Part of a complex required for lens intermediate filament formation composed of BFSP1, BFSP2 and CRYAA. Post-translationally, acetylation at Lys-70 may increase chaperone activity. In terms of processing, undergoes age-dependent proteolytical cleavage at the C-terminus.

It is found in the cytoplasm. The protein resides in the nucleus. Contributes to the transparency and refractive index of the lens. Acts as a chaperone, preventing aggregation of various proteins under a wide range of stress conditions. Required for the correct formation of lens intermediate filaments as part of a complex composed of BFSP1, BFSP2 and CRYAA. The chain is Alpha-crystallin A chain (CRYAA) from Ochotona princeps (Southern American pika).